A 435-amino-acid chain; its full sequence is Tumor necrosis factor receptor superfamily member 3 (435 aa).

The first 30 residues, 1 to 30, serve as a signal peptide directing secretion; the sequence is MLLPWATSAPGLAWGPLVLGLFGLLAASQP. At 31–227 the chain is on the extracellular side; the sequence is QAVPPYASEN…PPEMSGTMLM (197 aa). N-linked (GlcNAc...) asparagine glycosylation is present at asparagine 40. TNFR-Cys repeat units lie at residues 42 to 81, 82 to 124, 125 to 168, and 169 to 211; these read TCRD…TVCA, TCAE…KTQC, RCQP…NHCV, and PCKA…TTCK. 10 cysteine pairs are disulfide-bonded: cysteine 43/cysteine 58, cysteine 59/cysteine 72, cysteine 62/cysteine 80, cysteine 83/cysteine 98, cysteine 101/cysteine 116, cysteine 104/cysteine 124, cysteine 126/cysteine 132, cysteine 139/cysteine 148, cysteine 142/cysteine 167, and cysteine 170/cysteine 185. A glycan (N-linked (GlcNAc...) asparagine) is linked at asparagine 177. Residues 228 to 248 form a helical membrane-spanning segment; it reads LAVLLPLAFFLLLATVFSCIW. The Cytoplasmic portion of the chain corresponds to 249–435; the sequence is KSHPSLCRKL…GPRNQFITHD (187 aa). At serine 323 the chain carries Phosphoserine. Residues 373–399 show a composition bias toward pro residues; the sequence is PGPGDLPATPEPPYPIPEEGDPGPPGL. The interval 373-435 is disordered; it reads PGPGDLPATP…GPRNQFITHD (63 aa). The segment covering 403–417 has biased composition (basic and acidic residues); sequence HQEDGKAWHLAETEH. Residues 421 to 435 show a composition bias toward polar residues; it reads TPSNRGPRNQFITHD.

Self-associates; dimerization and trimerization are promoted by lymphotoxin (LTA(1)-LTB(2)). Associates with TRAF3. Associates with TRAF4. Associates with TRAF5. Interacts with Aedes aegypti lymphotoxin beta receptor inhibitor; the interaction reduces dimerization and trimerization of LTBR induced by lymphotoxin (LTA(1)-LTB(2)). As to quaternary structure, (Microbial infection) Interacts with HCV core protein.

It is found in the membrane. Functionally, receptor for the heterotrimeric lymphotoxin containing LTA and LTB, and for TNFS14/LIGHT. Activates NF-kappa-B signaling pathway upon stimulation with lymphotoxin (LTA(1)-LTB(2)). Promotes apoptosis via TRAF3 and TRAF5. May play a role in the development of lymphoid organs. The polypeptide is Tumor necrosis factor receptor superfamily member 3 (LTBR) (Homo sapiens (Human)).